The sequence spans 1196 residues: Protein BRASSINOSTEROID INSENSITIVE 1 (1196 aa).

An N-terminal signal peptide occupies residues 1-23 (MKTFSSFFLSVTTLFFFSFFSLS). Positions 62-69 (CTFDGVTC) match the Cys pair 1 motif. LRR repeat units follow at residues 71–98 (DDKV…LLSL), 99–121 (TGLE…FKCS), 122–146 (ASLT…SLGS), 148–169 (SGLK…VSGG), 172–197 (LNSL…VLSD), 199–221 (CGEL…VSRC), 222–244 (VNLE…LGDC), 245–268 (SALQ…ISTC), 269–290 (TELK…PLPL), 291–314 (KSLQ…LSGA), 316–338 (DTLT…FFGS), 339–363 (CSLL…TLLK), 364–388 (MRGL…LTNL), 390–413 (ASLL…LCQN), 415–439 (KNTL…LSNC), 441–463 (ELVS…LGSL), 464–487 (SKLR…LMYV), 488–511 (KTLE…LSNC), 513–535 (NLNW…IGRL), 536–559 (ENLA…LGDC), and 561–583 (SLIW…MFKQ). The N-linked (GlcNAc...) asparagine glycan is linked to N112. N-linked (GlcNAc...) asparagine glycosylation is present at N154. The N-linked (GlcNAc...) asparagine glycan is linked to N233. N275 is a glycosylation site (N-linked (GlcNAc...) asparagine). N-linked (GlcNAc...) asparagine glycosylation is found at N351, N387, N401, and N438. N-linked (GlcNAc...) asparagine glycosylation is present at N510. Residues N545 and N573 are each glycosylated (N-linked (GlcNAc...) asparagine). Position 597 (Y597) interacts with brassinolide. N636 carries an N-linked (GlcNAc...) asparagine glycan. The interval 640–642 (RVY) is SERK1 binding. Brassinolide is bound by residues Y642 and S647. N-linked (GlcNAc...) asparagine glycosylation is present at N653. LRR repeat units lie at residues 653-677 (NGSM…IGSM), 678-701 (PYLF…VGDL), 702-725 (RGLN…MSAL), and 727-750 (MLTE…QFET). N705 serves as a coordination point for brassinolide. The tract at residues 726–729 (TMLT) is SERK1 binding. Residue N737 is glycosylated (N-linked (GlcNAc...) asparagine). The SERK1 binding stretch occupies residues 746–750 (GQFET). Positions 763-770 (CGYPLPRC) match the Cys pair 2 motif. Residues 793-813 (AGSVAMGLLFSFVCIFGLILV) form a helical membrane-spanning segment. Y831 is modified (phosphotyrosine). The residue at position 838 (S838) is a Phosphoserine. Residues T842, T846, and T851 each carry the phosphothreonine modification. S858 bears the Phosphoserine mark. A phosphothreonine mark is found at T872 and T880. One can recognise a Protein kinase domain in the interval 883 to 1158 (FHNDSLIGSG…VQVMAMFKEI (276 aa)). 2 positions are modified to phosphoserine: S887 and S891. ATP-binding positions include 889–897 (IGSGGFGDV) and K911. Y956 carries the post-translational modification Phosphotyrosine. ATP is bound by residues 957–959 (EFM) and 963–966 (SLED). A Phosphoserine modification is found at S981. Phosphothreonine is present on T982. D1009 (proton acceptor) is an active-site residue. Residues 1009 to 1014 (DMKSSN) and D1027 contribute to the ATP site. S1035 is subject to Phosphoserine. T1039 bears the Phosphothreonine mark. S1042 and S1044 each carry phosphoserine. Phosphothreonine occurs at positions 1045 and 1049. Y1052 carries the post-translational modification Phosphotyrosine. The residue at position 1060 (S1060) is a Phosphoserine. A Phosphotyrosine modification is found at Y1072. 2 positions are modified to phosphoserine: S1166 and S1168. T1169 is modified (phosphothreonine). 2 positions are modified to phosphoserine: S1172 and S1179. A Phosphothreonine modification is found at T1180. Position 1187 is a phosphoserine (S1187).

It belongs to the protein kinase superfamily. Ser/Thr protein kinase family. In terms of assembly, monomer or homodimer in the plasma membrane. Heterodimer with BAK1 in the endosomes. Interacts with SERK1 and TTL in a kinase-dependent manner. Bind to SERK1 in a brassinolide-dependent manner. Component of the SERK1 signaling complex, composed of KAPP, CDC48A, GRF6 or GRF7, SERK1, SERK2, SERK3/BAK1 and BRI1. Interacts with CDG1. No interactions with PSKR1 or CNGC17. Interacts with BIK1. Interacts with B'ALPHA, B'BETA, B'GAMMA and B'ETA. Interacts with BSK1 and BSK3. Interacts with BSK5, BSK6 and BSK11. In terms of processing, autophosphorylated on Tyr-831, Tyr-956 and maybe Tyr-1072. Phosphorylated on at least 12 sites, with a preference for Ser residues. Transphosphorylated on Ser-887 by SERK1 and on Ser-838, Thr-846, Ser-858 and Ser-1166 by BAK1. Phosphorylation on Ser-1166 enhances the kinase activity. Glycosylated. Expressed ubiquitously.

It is found in the cell membrane. It localises to the endosome membrane. It carries out the reaction L-seryl-[protein] + ATP = O-phospho-L-seryl-[protein] + ADP + H(+). The enzyme catalyses L-threonyl-[protein] + ATP = O-phospho-L-threonyl-[protein] + ADP + H(+). It catalyses the reaction L-tyrosyl-[protein] + ATP = O-phospho-L-tyrosyl-[protein] + ADP + H(+). Activated by Ser and Thr phosphorylation. Receptor with a dual specificity kinase activity acting on both serine/threonine- and tyrosine-containing substrates. Regulates, in response to brassinosteroid binding, a signaling cascade involved in plant development, including expression of light- and stress-regulated genes, promotion of cell elongation, normal leaf and chloroplast senescence, and flowering. Binds brassinolide (BL), and less effectively castasterone (CS), but not 2,3,22,23-O-tetramethylbrassinolide or ecdysone. May be involved in a feedback regulation of brassinosteroid biosynthesis. Phosphorylates BRI1-associated receptor kinase 1 (BAK1), Transthyretin-Like protein (TTL) and SERK1 on 'Ser-299' and 'Thr-462' in vitro. May have a guanylyl cyclase activity. Phosphorylates BSK1, BSK2 and BSK3 in vitro. Phosphorylates BSK1, BSK3, BSK5, BSK6, BSK8 and BSK11 in vitro. This chain is Protein BRASSINOSTEROID INSENSITIVE 1, found in Arabidopsis thaliana (Mouse-ear cress).